A 161-amino-acid polypeptide reads, in one-letter code: SsrA-binding protein (161 aa).

It belongs to the SmpB family.

It is found in the cytoplasm. Its function is as follows. Required for rescue of stalled ribosomes mediated by trans-translation. Binds to transfer-messenger RNA (tmRNA), required for stable association of tmRNA with ribosomes. tmRNA and SmpB together mimic tRNA shape, replacing the anticodon stem-loop with SmpB. tmRNA is encoded by the ssrA gene; the 2 termini fold to resemble tRNA(Ala) and it encodes a 'tag peptide', a short internal open reading frame. During trans-translation Ala-aminoacylated tmRNA acts like a tRNA, entering the A-site of stalled ribosomes, displacing the stalled mRNA. The ribosome then switches to translate the ORF on the tmRNA; the nascent peptide is terminated with the 'tag peptide' encoded by the tmRNA and targeted for degradation. The ribosome is freed to recommence translation, which seems to be the essential function of trans-translation. This chain is SsrA-binding protein, found in Vesicomyosocius okutanii subsp. Calyptogena okutanii (strain HA).